The sequence spans 168 residues: Phosphopantetheine adenylyltransferase (168 aa).

S9 is a binding site for substrate. ATP is bound by residues 9–10 (SF) and H17. Substrate-binding residues include K41, L73, and R87. ATP-binding positions include 88–90 (GMR), E98, and 123–129 (WIYTSSS).

It belongs to the bacterial CoaD family. As to quaternary structure, homohexamer. Mg(2+) is required as a cofactor.

It localises to the cytoplasm. The catalysed reaction is (R)-4'-phosphopantetheine + ATP + H(+) = 3'-dephospho-CoA + diphosphate. It functions in the pathway cofactor biosynthesis; coenzyme A biosynthesis; CoA from (R)-pantothenate: step 4/5. In terms of biological role, reversibly transfers an adenylyl group from ATP to 4'-phosphopantetheine, yielding dephospho-CoA (dPCoA) and pyrophosphate. The chain is Phosphopantetheine adenylyltransferase from Desulfosudis oleivorans (strain DSM 6200 / JCM 39069 / Hxd3) (Desulfococcus oleovorans).